The primary structure comprises 461 residues: tRNA modification GTPase MnmE (461 aa).

Residues Lys32, Glu89, and Lys128 each contribute to the (6S)-5-formyl-5,6,7,8-tetrahydrofolate site. In terms of domain architecture, TrmE-type G spans 224 to 387; the sequence is GHALSIVGKP…LSQKISAFFP (164 aa). Position 234 (Asn234) interacts with K(+). GTP-binding positions include 234–239, 253–259, and 278–281; these read NAGKSS, SDIKGTT, and DTAG. Ser238 contacts Mg(2+). K(+) contacts are provided by Ser253, Ile255, and Thr258. Thr259 is a binding site for Mg(2+). Lys461 is a (6S)-5-formyl-5,6,7,8-tetrahydrofolate binding site.

It belongs to the TRAFAC class TrmE-Era-EngA-EngB-Septin-like GTPase superfamily. TrmE GTPase family. Homodimer. Heterotetramer of two MnmE and two MnmG subunits. Requires K(+) as cofactor.

The protein resides in the cytoplasm. Exhibits a very high intrinsic GTPase hydrolysis rate. Involved in the addition of a carboxymethylaminomethyl (cmnm) group at the wobble position (U34) of certain tRNAs, forming tRNA-cmnm(5)s(2)U34. This is tRNA modification GTPase MnmE from Helicobacter pylori (strain ATCC 700392 / 26695) (Campylobacter pylori).